The chain runs to 305 residues: Putative monooxygenase p33MONOX (305 aa).

2 disordered regions span residues 1–20 (MASRQPEVPALEASGPLGKM) and 37–56 (LEDPAPMTPPPSDMGSVPWK). A Phosphothreonine modification is found at Thr44. The Flavin-containing monooxygenase motif signature appears at 67-77 (LAKVEEGEASL). The interval 159-305 (SGEITKEERQ…DLNVLTPTGF (147 aa)) is disordered. Over residues 169-183 (PASAQSTPSTTPHSS) the composition is skewed to low complexity. Residue Thr175 is modified to Phosphothreonine. Phosphoserine occurs at positions 182 and 183. Polar residues-rich tracts occupy residues 191–210 (WFTSGSSTALPGPNPSTMDS) and 233–243 (KYDSGSSTTQA).

It belongs to the P33MONOX family. As to quaternary structure, interacts with NELFB, NOL12 and PRNP.

Its subcellular location is the cytoplasm. Potential NADPH-dependent oxidoreductase. May be involved in the regulation of neuronal survival, differentiation and axonal outgrowth. This chain is Putative monooxygenase p33MONOX (P33MONOX), found in Pongo abelii (Sumatran orangutan).